The sequence spans 225 residues: Uridylate kinase (225 aa).

9 to 10 lines the ATP pocket; sequence GS. Residue G44 coordinates UMP. ATP-binding residues include G45 and R49. UMP-binding positions include D66 and 114–120; that span reads THPGHTT. Residues T140, N141, Y146, and D149 each coordinate ATP.

This sequence belongs to the UMP kinase family. Homohexamer.

The protein localises to the cytoplasm. The enzyme catalyses UMP + ATP = UDP + ADP. Its pathway is pyrimidine metabolism; CTP biosynthesis via de novo pathway; UDP from UMP (UMPK route): step 1/1. With respect to regulation, inhibited by UTP. Functionally, catalyzes the reversible phosphorylation of UMP to UDP. The chain is Uridylate kinase from Thermococcus onnurineus (strain NA1).